The primary structure comprises 82 residues: Small ribosomal subunit protein uS17 (82 aa).

This sequence belongs to the universal ribosomal protein uS17 family. In terms of assembly, part of the 30S ribosomal subunit.

In terms of biological role, one of the primary rRNA binding proteins, it binds specifically to the 5'-end of 16S ribosomal RNA. In Shewanella amazonensis (strain ATCC BAA-1098 / SB2B), this protein is Small ribosomal subunit protein uS17.